We begin with the raw amino-acid sequence, 472 residues long: Glutamate--tRNA ligase (472 aa).

The 'HIGH' region motif lies at 10 to 20 (PSPTGYLHVGG). Zn(2+) contacts are provided by Cys-99, Cys-101, Cys-126, and Asp-128. The 'KMSKS' region motif lies at 238 to 242 (KLSKR). Position 241 (Lys-241) interacts with ATP.

The protein belongs to the class-I aminoacyl-tRNA synthetase family. Glutamate--tRNA ligase type 1 subfamily. Monomer. Zn(2+) serves as cofactor.

Its subcellular location is the cytoplasm. It catalyses the reaction tRNA(Glu) + L-glutamate + ATP = L-glutamyl-tRNA(Glu) + AMP + diphosphate. Catalyzes the attachment of glutamate to tRNA(Glu) in a two-step reaction: glutamate is first activated by ATP to form Glu-AMP and then transferred to the acceptor end of tRNA(Glu). The polypeptide is Glutamate--tRNA ligase (Photorhabdus laumondii subsp. laumondii (strain DSM 15139 / CIP 105565 / TT01) (Photorhabdus luminescens subsp. laumondii)).